We begin with the raw amino-acid sequence, 349 residues long: MSSVEPDMEDLFQEKKRVRNPLVPLGALMTAGVLTAGLISFRRGNSQLGQVLMRARVVVQGATVALMVGTGYYYGDNPWKKLLLSEIHETEALSPKSSSAATLTLMNQKDPSSSSIVSVLCLVISGLALIIVFLGVLYLIFKFLRKSSTLFPIPHFNYNPDLFSFSSPQLQHLFFLHDSGLDQTAIDALPVFLYGNVTISLEQPFDCAVCLNEFSDTDKLRLLPVCSHAFHLHCIDTWLLSNSTCPLCRRSLSTSNVCYNHSETLVAPLSGHQQVDDGKASLAKRVFSVRLGRFKSTNESQSQRHDVKDEIGVRMPRRCYSMGTQQYLVCDQDFVVALSSSPREGNIGR.

An HIG1 domain is found at 1–85 (MSSVEPDMED…DNPWKKLLLS (85 aa)). S2 is modified (N-acetylserine). A run of 3 helical transmembrane segments spans residues 21–41 (PLVPLGALMTAGVLTAGLISF), 55–75 (ARVVVQGATVALMVGTGYYYG), and 121–141 (CLVISGLALIIVFLGVLYLIF). The segment at 207-249 (CAVCLNEFSDTDKLRLLPVCSHAFHLHCIDTWLLSNSTCPLCR) adopts an RING-type; atypical zinc-finger fold.

It belongs to the RING-type zinc finger family. ATL subfamily.

The protein localises to the membrane. The enzyme catalyses S-ubiquitinyl-[E2 ubiquitin-conjugating enzyme]-L-cysteine + [acceptor protein]-L-lysine = [E2 ubiquitin-conjugating enzyme]-L-cysteine + N(6)-ubiquitinyl-[acceptor protein]-L-lysine.. Its pathway is protein modification; protein ubiquitination. In Arabidopsis thaliana (Mouse-ear cress), this protein is RING-H2 finger protein ATL48 (ATL48).